The chain runs to 85 residues: HssA/B-like protein 59 (85 aa).

The protein belongs to the hssA/B family.

The polypeptide is HssA/B-like protein 59 (hssl59) (Dictyostelium discoideum (Social amoeba)).